The primary structure comprises 285 residues: MKYIGAHVSAAGGLANAPARAAEIGATAFALFTKNQRQWRAAPLTPQVIDDFKIACEKYHFSAAQILPHDSYLINLGHPVSEALEKSRDAFLDEMQRCEQLGLTLLNFHPGSHLMQIAQEDCLARIAESINIALAQTEGVTAVIENTAGQGSNLGFEFEQLAAIIDGVEDKSRVGVCIDTCHAFAAGYDLRTPEACEKTFAGFGKIVGFQYLRGMHLNDAKSAFGSRVDRHHSLGEGNIGHDAFRWIMQDGRFDGIPLILETINPDIWAEEIAWLKAQQIAEAVA.

Residues His69, His109, Glu145, Asp179, His182, His216, Asp229, His231, and Glu261 each contribute to the Zn(2+) site.

Belongs to the AP endonuclease 2 family. It depends on Zn(2+) as a cofactor.

The enzyme catalyses Endonucleolytic cleavage to 5'-phosphooligonucleotide end-products.. Functionally, endonuclease IV plays a role in DNA repair. It cleaves phosphodiester bonds at apurinic or apyrimidinic (AP) sites, generating a 3'-hydroxyl group and a 5'-terminal sugar phosphate. The chain is Probable endonuclease 4 from Salmonella agona (strain SL483).